Here is a 224-residue protein sequence, read N- to C-terminus: Phosphoglycolate phosphatase (224 aa).

The active-site Nucleophile is the Asp11. Positions 11, 13, and 177 each coordinate Mg(2+).

This sequence belongs to the HAD-like hydrolase superfamily. CbbY/CbbZ/Gph/YieH family. It depends on Mg(2+) as a cofactor.

The enzyme catalyses 2-phosphoglycolate + H2O = glycolate + phosphate. Its pathway is organic acid metabolism; glycolate biosynthesis; glycolate from 2-phosphoglycolate: step 1/1. Its function is as follows. Specifically catalyzes the dephosphorylation of 2-phosphoglycolate. Is involved in the dissimilation of the intracellular 2-phosphoglycolate formed during the DNA repair of 3'-phosphoglycolate ends, a major class of DNA lesions induced by oxidative stress. The chain is Phosphoglycolate phosphatase from Haemophilus influenzae (strain 86-028NP).